The following is a 317-amino-acid chain: Probable cell division protein WhiA (317 aa).

Positions 267 to 300 form a DNA-binding region, H-T-H motif; sequence SLKELGEMLHPPVGKSGVNHRLRRLELIARQVRG.

The protein belongs to the WhiA family.

Its function is as follows. Involved in cell division and chromosome segregation. The chain is Probable cell division protein WhiA from Moorella thermoacetica (strain ATCC 39073 / JCM 9320).